Reading from the N-terminus, the 556-residue chain is Guanine nucleotide-binding protein-like 3 homolog (556 aa).

Residues Asn29–Ser50 are disordered. Residues Lys58–Leu95 are a coiled coil. The 180-residue stretch at Ala138–Val317 folds into the CP-type G domain. GTP is bound by residues Asn184 to Asp187, Gly266 to Ser273, and Asp310 to Gly313. 2 disordered regions span residues Ala461–Leu508 and Lys525–Met556. Residues Asp466–Asp478 are compositionally biased toward acidic residues. The span at Lys525 to Ala535 shows a compositional bias: basic residues.

The protein belongs to the TRAFAC class YlqF/YawG GTPase family.

The protein localises to the nucleus. In terms of biological role, may play a role in regulating cellular proliferation in both germline and somatic tissues. In Caenorhabditis elegans, this protein is Guanine nucleotide-binding protein-like 3 homolog.